Reading from the N-terminus, the 229-residue chain is Endonuclease V (229 aa).

Belongs to the endonuclease V family.

The protein localises to the cytoplasm. The enzyme catalyses Endonucleolytic cleavage at apurinic or apyrimidinic sites to products with a 5'-phosphate.. Functionally, DNA repair enzyme involved in the repair of deaminated bases. Selectively cleaves double-stranded DNA at the second phosphodiester bond 3' to a deoxyinosine leaving behind the intact lesion on the nicked DNA. The sequence is that of Endonuclease V from Methanopyrus kandleri (strain AV19 / DSM 6324 / JCM 9639 / NBRC 100938).